Here is a 229-residue protein sequence, read N- to C-terminus: Cytidylate kinase (229 aa).

Residue 12-20 (GPSGAGKGT) participates in ATP binding.

Belongs to the cytidylate kinase family. Type 1 subfamily.

Its subcellular location is the cytoplasm. It carries out the reaction CMP + ATP = CDP + ADP. The enzyme catalyses dCMP + ATP = dCDP + ADP. In Pseudomonas aeruginosa (strain LESB58), this protein is Cytidylate kinase.